We begin with the raw amino-acid sequence, 148 residues long: Flavodoxin (148 aa).

The Flavodoxin-like domain occupies valine 4–leucine 145.

Belongs to the flavodoxin family. Requires FMN as cofactor.

Its function is as follows. Low-potential electron donor to a number of redox enzymes. The sequence is that of Flavodoxin from Desulfovibrio desulfuricans (strain ATCC 27774 / DSM 6949 / MB).